The chain runs to 156 residues: ATP synthase subunit b (156 aa).

Residues 3-23 (INFTLLAQALAFAGLIWIIAT) form a helical membrane-spanning segment.

This sequence belongs to the ATPase B chain family. As to quaternary structure, F-type ATPases have 2 components, F(1) - the catalytic core - and F(0) - the membrane proton channel. F(1) has five subunits: alpha(3), beta(3), gamma(1), delta(1), epsilon(1). F(0) has three main subunits: a(1), b(2) and c(10-14). The alpha and beta chains form an alternating ring which encloses part of the gamma chain. F(1) is attached to F(0) by a central stalk formed by the gamma and epsilon chains, while a peripheral stalk is formed by the delta and b chains.

Its subcellular location is the cell membrane. In terms of biological role, f(1)F(0) ATP synthase produces ATP from ADP in the presence of a proton or sodium gradient. F-type ATPases consist of two structural domains, F(1) containing the extramembraneous catalytic core and F(0) containing the membrane proton channel, linked together by a central stalk and a peripheral stalk. During catalysis, ATP synthesis in the catalytic domain of F(1) is coupled via a rotary mechanism of the central stalk subunits to proton translocation. Functionally, component of the F(0) channel, it forms part of the peripheral stalk, linking F(1) to F(0). This chain is ATP synthase subunit b, found in Stenotrophomonas maltophilia (strain K279a).